We begin with the raw amino-acid sequence, 7639 residues long: Nonribosomal peptide synthetase 4 (7639 aa).

Positions 244-636 (WQGAMRPDAE…AGRKDAQIKF (393 aa)) are adenylation 1. The Carrier 1 domain occupies 776-852 (TFSNGTESQL…ALARHVKEIE (77 aa)). At serine 813 the chain carries O-(pantetheine 4'-phosphoryl)serine. The segment at 865-1295 (FELSPIQRLY…EQNLSLLVES (431 aa)) is epimerization 1. Residues 1337-1767 (VEDIYPCSPM…HLGPRHHQQI (431 aa)) form a condensation 1 region. Residues 1786–2181 (FEEQAILRPE…FGRKDTQVKL (396 aa)) are adenylation 2. In terms of domain architecture, Carrier 2 spans 2313–2389 (APASDMEKQL…DMAQSALPLS (77 aa)). At serine 2350 the chain carries O-(pantetheine 4'-phosphoryl)serine. A condensation 2 region spans residues 2426-2852 (VEDIYPCTPL…LISTRDYQSL (427 aa)). Residues 2878 to 3269 (QPLDKLAVCA…QGRKDNQVKI (392 aa)) form an adenylation 3 region. A Carrier 3 domain is found at 3403–3479 (REATETETKL…KLASFVQAVE (77 aa)). At serine 3440 the chain carries O-(pantetheine 4'-phosphoryl)serine. Residues 3491–3928 (AFPLSPIQKL…RMTQAKAEPQ (438 aa)) form an epimerization 2 region. The tract at residues 3961 to 4389 (EAVYPCSPVQ…VSDDCAQQLT (429 aa)) is condensation 3. An adenylation 4 region spans residues 4407 to 4810 (FERNVQSLPH…VSRKDTQIKL (404 aa)). The region spanning 4944–5020 (APTTMMQRKL…EMATCCGHSE (77 aa)) is the Carrier 4 domain. Serine 4981 bears the O-(pantetheine 4'-phosphoryl)serine mark. Residues 5058–5478 (QDLYPCSSLQ…QFCSEEDLQM (421 aa)) are condensation 4. The tract at residues 5498 to 5900 (FWQSVATYHD…IGRKDNQVKL (403 aa)) is adenylation 5. One can recognise a Carrier 5 domain in the interval 6039 to 6115 (TDTTFVGQLL…DLVTLIEKEG (77 aa)). An O-(pantetheine 4'-phosphoryl)serine modification is found at serine 6076. The tract at residues 6133–6567 (FALSPIQQLF…EVLGNMAMEL (435 aa)) is epimerization 3. A condensation 5 region spans residues 6607-7032 (VEDMYPCSPM…EALSHLRVSQ (426 aa)). In terms of domain architecture, Carrier 6 spans 7088–7164 (RDKDQVYNKL…TLLNCLRDKS (77 aa)). O-(pantetheine 4'-phosphoryl)serine is present on serine 7125. Positions 7254–7603 (LDGEGPLDVA…SNTEVCFLYR (350 aa)) are condensation 6.

Belongs to the NRP synthetase family.

The catalysed reaction is D-allo-threonine + D-leucine + D-alanine + L-proline + 2 L-leucine + A = fusahexin + AH2 + 6 H2O. Its pathway is secondary metabolite biosynthesis. Functionally, nonribosomal peptide synthetase; part of the gene cluster that mediates the biosynthesis of the fusahexin, a cyclic hydrophobic hexapeptide with the amino acid sequence cyclo-(D-Ala-L-Leu-D-allo-Thr-L-Pro-D-Leu-L-Leu) that plays an important role in cell surface hydrophobicity. Fusahexin might also play a role in virulence, sensitivity to osmotic stress and oxidative stress. NRPS4 is the only enzyme within the cluster and its 5 catalytic modules are sufficient to produce fusahexin. The modules 1 to 4 incorporate respectively D-alanine, L-leucine, D-allo-threonine, and L-proline, which is supported by the presence of epimerase domains in modules 1 and 3, which incorporate D-amino acids. The terminal module is responsible for incorporation of the two adjacent leucine units, where the epimerase domain is only used to convert the first unit to D-leucine. The terminal condensation domain (Ct) is involved in cyclization with D-alanine and thereby releasing of fusahexin. In Gibberella zeae (strain ATCC MYA-4620 / CBS 123657 / FGSC 9075 / NRRL 31084 / PH-1) (Wheat head blight fungus), this protein is Nonribosomal peptide synthetase 4.